The sequence spans 1092 residues: Isoleucine--tRNA ligase (1092 aa).

A 'HIGH' region motif is present at residues 53-63 (PFANGLPHYGH). A 'KMSKS' region motif is present at residues 613–617 (KLSKR). Position 616 (K616) interacts with ATP.

This sequence belongs to the class-I aminoacyl-tRNA synthetase family. IleS type 2 subfamily. Monomer. Zn(2+) is required as a cofactor.

The protein resides in the cytoplasm. It carries out the reaction tRNA(Ile) + L-isoleucine + ATP = L-isoleucyl-tRNA(Ile) + AMP + diphosphate. In terms of biological role, catalyzes the attachment of isoleucine to tRNA(Ile). As IleRS can inadvertently accommodate and process structurally similar amino acids such as valine, to avoid such errors it has two additional distinct tRNA(Ile)-dependent editing activities. One activity is designated as 'pretransfer' editing and involves the hydrolysis of activated Val-AMP. The other activity is designated 'posttransfer' editing and involves deacylation of mischarged Val-tRNA(Ile). The sequence is that of Isoleucine--tRNA ligase from Rickettsia africae (strain ESF-5).